The sequence spans 161 residues: Low molecular weight phosphotyrosine protein phosphatase (161 aa).

Cys14 serves as the catalytic Nucleophile. The Transition state stabilizer role is filled by Arg20. Phosphoserine is present on Ser57. Asp133 (proton donor) is an active-site residue.

Belongs to the low molecular weight phosphotyrosine protein phosphatase family.

It is found in the cytoplasm. The enzyme catalyses O-phospho-L-tyrosyl-[protein] + H2O = L-tyrosyl-[protein] + phosphate. It carries out the reaction a phosphate monoester + H2O = an alcohol + phosphate. Its function is as follows. Acts on tyrosine phosphorylated proteins, low-MW aryl phosphates and natural and synthetic acyl phosphates. The polypeptide is Low molecular weight phosphotyrosine protein phosphatase (Saccharomyces cerevisiae (strain ATCC 204508 / S288c) (Baker's yeast)).